Reading from the N-terminus, the 993-residue chain is MTWLLFRTSGALAILMVLILVHGELRIETKGQHGEDETAIQGRRRYKREWVKFAKPCREREDNSRRNPIAKITSDFQATQKITYRISGMGIDQPPFGIFVVDKNTGEINITAIVDREETPSFQITCHALNVLGQDVEKPLILTVKILDVNDNAPVFSQSIFMGEIEENSASNSLVMILNATDADEPNHLNSKIAFKIVSQEPAGTPMFLLSRHTGEVRTLTNSLDREQVSSYRLVVSGADKDGEGLSTQCECSIKVKDVNDNFPMFKESQYSAHIKENTLTSELLRFQVIDWDEEFTDNWLAVYFFTSGNEGNWFEIQTDPRTNEGILKVVKALDYEQLQSVQFSIAVKNKAEFHQSVISQYQVKSTPVTIQVVNVKEGIAFHPASKTFTVRKGISSKKLVNYVLGTYQAIDEDTNKAASYVKYVMGRNDGGLLFIDPKTAQIKFVRNIDRDSTFIVNKTITAEVLAIDENTGKTATGTIYVEVPGFNENCPTVVLEKKAICSSLRSVVVSARVPDNKYTGPYTFSLEEQSLKLPVVWSITTLNATSALLNAQQQLSPGEYTISLTVTDSQDRQCETPESLTLEVCQCDNRDICRSSNGNKDYERLDGKRPSGRLGSAAIGLLLLGLLLLLLAPLLLLTCDYGVGPIGGVTGGFIPVPDGSEGTIHQWGIEGAQPEDKEITNICVPPITTSGADFMENSEVCTNTYAGGTVVEGASGMELTTKLGAATGSGAAAGFGATAGFGAATGLGIGSAGQSGTMRTRHSTGGTNKDYGEGAISMNFLDSYFSQKAFACAEEDDVQEANDCLLIYDNEGMGAPSSPVGSLGCCSFIADELDDSFLDSLGPKFKKLAEISLGIDDEAKQSQPLSKASLSGMESCGYSLEVQQPESVRGQTLLGSQGASALSASSSVLQSATSIPNPVQHGSYMVTETYSASGSLVQPTTTVLEPLLTQNVTVTERVICPISNVSGNLQTPMELRGSRNMICTEDPCSRLI.

Residues 1–23 (MTWLLFRTSGALAILMVLILVHG) form the signal peptide. A propeptide spanning residues 24 to 48 (ELRIETKGQHGEDETAIQGRRRYKR) is cleaved from the precursor. Cadherin domains follow at residues 48–156 (REWV…APVF), 157–266 (SQSI…FPMF), 267–386 (KESQ…HPAS), and 383–494 (HPAS…CPTV). Residues 49 to 617 (EWVKFAKPCR…GKRPSGRLGS (569 aa)) lie on the Extracellular side of the membrane. N-linked (GlcNAc...) asparagine glycans are attached at residues Asn-109 and Asn-179. 2 N-linked (GlcNAc...) asparagine glycosylation sites follow: Asn-458 and Asn-544. A helical transmembrane segment spans residues 618–638 (AAIGLLLLGLLLLLLAPLLLL). Residues 639 to 993 (TCDYGVGPIG…CTEDPCSRLI (355 aa)) are Cytoplasmic-facing. Residues 641–713 (DYGVGPIGGV…NTYAGGTVVE (73 aa)) form a required for interaction with CTNND1 and localization at cell-cell junctions region. 2 Desmoglein repeat repeats span residues 903–929 (LSAS…MVTE) and 930–960 (TYSA…ERVI).

Homodimer. Part of a complex that contains DSG3, PKP1, YAP1 and YWHAG; the complex is required for localization of DSG3 and YAP1 to the cell membrane in keratinocytes. Interacts with PKP2. Interacts with CTNND1; the interaction facilitates DSG3 localization and retention at cell-cell junctions. Interacts with CDH1; the interaction is required for CDH1 localization to developing adherens junctions. Interacts with RAC1; the interaction is required for DSG3 translocation to cell-cell junctions, organization of cortical F-actin bundles and actin anchoring at cell-cell junctions. Interacts with DSC3; the interaction may limit the interaction of DSC3 with p38MAPK family members and therefore repress p38MAPK signaling activation.

It localises to the cell membrane. The protein localises to the cell junction. Its subcellular location is the desmosome. The protein resides in the cytoplasm. It is found in the tight junction. Functionally, a component of desmosome cell-cell junctions which are required for positive regulation of cellular adhesion. Required for adherens and desmosome junction assembly in response to mechanical force in keratinocytes. Required for desmosome-mediated cell-cell adhesion of cells surrounding the telogen hair club and the basal layer of the outer root sheath epithelium, consequently is essential for the anchoring of telogen hairs in the hair follicle. Required for the maintenance of the epithelial barrier via promoting desmosome-mediated intercellular attachment of suprabasal epithelium to basal cells. May play a role in the protein stability of the desmosome plaque components DSP, JUP, PKP1, PKP2 and PKP3. Required for YAP1 localization at the plasma membrane in keratinocytes in response to mechanical strain, via the formation of an interaction complex composed of DSG3, PKP1 and YWHAG. May also be involved in the positive regulation of YAP1 target gene transcription and as a result cell proliferation. Positively regulates cellular contractility and cell junction formation via organization of cortical F-actin bundles and anchoring of actin to tight junctions, in conjunction with RAC1. The cytoplasmic pool of DSG3 is required for the localization of CDH1 and CTNNB1 at developing adherens junctions, potentially via modulation of SRC activity. Inhibits keratinocyte migration via suppression of p38MAPK signaling, may therefore play a role in moderating wound healing. This Canis lupus familiaris (Dog) protein is Desmoglein-3 (DSG3).